A 277-amino-acid chain; its full sequence is MALKKYNPTTPGQRQLVMVDRSALYKGKPVKVLTEGKHSNGGRNNTGRITVRFRGGGHKKTYRIVDFKRTKVDVPAKVERLEYDPNRTAFIALIKYADGEQAYILAPQRLAVGDTVIAGAYVDVKPGNVMPLGNMPIGTIVHNVEMKIGKGGQIARSAGTYAQLVGRDHDYVIVRLNSGEQRLIHGRCTATIGAVSNPDHMNISIGKAGRTRWLGWRPHNRGVVMNPIDHPHGGGEGRTSGGRHPVTPWGKPTKGKKTRSNKSTNKFILISRHKRKK.

The interval N226 to K277 is disordered.

This sequence belongs to the universal ribosomal protein uL2 family. As to quaternary structure, part of the 50S ribosomal subunit. Forms a bridge to the 30S subunit in the 70S ribosome.

Its function is as follows. One of the primary rRNA binding proteins. Required for association of the 30S and 50S subunits to form the 70S ribosome, for tRNA binding and peptide bond formation. It has been suggested to have peptidyltransferase activity; this is somewhat controversial. Makes several contacts with the 16S rRNA in the 70S ribosome. In Rhodopseudomonas palustris (strain BisA53), this protein is Large ribosomal subunit protein uL2.